A 218-amino-acid chain; its full sequence is MDIDNSILIRVVLLGDYCVGKTTTGFVFDGKQFDFSRNCNIGVDFFVKHIVVDNQCVRLQVWDTGGQERFKTITRSYFRNTSCCLLFFSVDDQKSFENIDMWYSLAFEKYDLLNYPVVLVGNKIDLPQEKHVITKKMAEEWCKNQQTKLNLKFSIPYFETSAKNNININEIFYSAAELGLKNIVFKNNNNNNNYNNNNKLNGNKEIQNEKNKGMCFIL.

Residue 15-22 (GDYCVGKT) participates in GTP binding. Residues 37–45 (RNCNIGVDF) carry the Effector region motif. GTP contacts are provided by residues 63 to 67 (DTGGQ) and 122 to 125 (NKID). Position 215 is a cysteine methyl ester (Cys215). Residue Cys215 is the site of S-geranylgeranyl cysteine attachment. Positions 216 to 218 (FIL) are cleaved as a propeptide — removed in mature form.

Belongs to the small GTPase superfamily. Rab family.

The protein resides in the cell membrane. The sequence is that of Ras-related protein RabO (rabO) from Dictyostelium discoideum (Social amoeba).